The primary structure comprises 372 residues: Heat shock 70 kDa protein II (372 aa).

It belongs to the heat shock protein 70 family.

The sequence is that of Heat shock 70 kDa protein II (HSP70II) from Paracentrotus lividus (Common sea urchin).